Consider the following 302-residue polypeptide: Glycine--tRNA ligase alpha subunit (302 aa).

Belongs to the class-II aminoacyl-tRNA synthetase family. Tetramer of two alpha and two beta subunits.

Its subcellular location is the cytoplasm. It catalyses the reaction tRNA(Gly) + glycine + ATP = glycyl-tRNA(Gly) + AMP + diphosphate. This Xanthomonas euvesicatoria pv. vesicatoria (strain 85-10) (Xanthomonas campestris pv. vesicatoria) protein is Glycine--tRNA ligase alpha subunit.